We begin with the raw amino-acid sequence, 54 residues long: Kazal-type inhibitor-like protein (54 aa).

A Kazal-like domain is found at 1–54 (MKVNCKGYPTKFCFGKPLPHCASDGKTYPNRCRFCNAFVKSHGLITLRYYGKCK). 3 disulfides stabilise this stretch: Cys5–Cys35, Cys13–Cys32, and Cys21–Cys53.

As to quaternary structure, may form disulfide-linked dimers or trimers (in vitro). Expressed by the venom gland.

The protein localises to the secreted. Partially inhibits trypsin in vitro at slightly acidic pH and concentrations in excess of 0.3 mM. Has no protease inhibitory activity at neutral or basic pH. Has no antibacterial activity. Shows no toxicity in vertebrates apart from transient paw edema in mouse. In Bothriechis schlegelii (Eyelash palm pitviper), this protein is Kazal-type inhibitor-like protein.